A 335-amino-acid chain; its full sequence is Mitochondrial amidoxime reducing component 2 (335 aa).

The N-terminal 35 residues, 1-35 (MGASSSSALARLGLPAQARPRWLGVAVLGLAAVAL), are a transit peptide targeting the mitochondrion. Residues Lys59, Lys138, and Lys144 each participate in a glycyl lysine isopeptide (Lys-Gly) (interchain with G-Cter in ubiquitin) cross-link. Lys156 carries the post-translational modification N6-acetyllysine; alternate. Lys156 participates in a covalent cross-link: Glycyl lysine isopeptide (Lys-Gly) (interchain with G-Cter in ubiquitin); alternate. Glycyl lysine isopeptide (Lys-Gly) (interchain with G-Cter in ubiquitin) cross-links involve residues Lys173, Lys187, Lys287, and Lys294. One can recognise an MOSC domain in the interval 188–334 (GRTSRKLLPT…LRVGDPVYRM (147 aa)).

In terms of assembly, component of a complex composed of cytochrome b5, NADH-cytochrome b5 reductase (CYB5R3) and MTARC2. The cofactor is Mo-molybdopterin. Post-translationally, ubiquitinated by PRKN during mitophagy, leading to its degradation and enhancement of mitophagy. Deubiquitinated by USP30.

It localises to the mitochondrion outer membrane. It is found in the peroxisome. It carries out the reaction N(omega)-hydroxy-L-arginine + 2 Fe(II)-[cytochrome b5] + 2 H(+) = L-arginine + 2 Fe(III)-[cytochrome b5] + H2O. In terms of biological role, catalyzes the reduction of N-oxygenated molecules, acting as a counterpart of cytochrome P450 and flavin-containing monooxygenases in metabolic cycles. As a component of prodrug-converting system, reduces a multitude of N-hydroxylated prodrugs particularly amidoximes, leading to increased drug bioavailability. May be involved in mitochondrial N(omega)-hydroxy-L-arginine (NOHA) reduction, regulating endogenous nitric oxide levels and biosynthesis. Postulated to cleave the N-OH bond of N-hydroxylated substrates in concert with electron transfer from NADH to cytochrome b5 reductase then to cytochrome b5, the ultimate electron donor that primes the active site for substrate reduction. The polypeptide is Mitochondrial amidoxime reducing component 2 (MTARC2) (Macaca fascicularis (Crab-eating macaque)).